We begin with the raw amino-acid sequence, 112 residues long: Ig kappa chain V-II region MOPC 167 (112 aa).

The tract at residues 1 to 23 (DIVITQDELSNPVTSGESVSISC) is framework-1. The cysteines at positions 23 and 93 are disulfide-linked. The complementarity-determining-1 stretch occupies residues 24-39 (RSSKSLLYKDGKTYLN). The interval 40–54 (WFLQRPGQSPQLLIS) is framework-2. The complementarity-determining-2 stretch occupies residues 55–61 (LMSTRAS). A framework-3 region spans residues 62-93 (GVSDRFSGSGSRTDFTLEISRVKAEDVGVYYC). The interval 94 to 102 (QQLVEYPLT) is complementarity-determining-3. A framework-4 region spans residues 103–112 (FGAGTKLELK).

This Mus musculus (Mouse) protein is Ig kappa chain V-II region MOPC 167.